The chain runs to 293 residues: Cytosolic Fe-S cluster assembly factor CFD1 (293 aa).

25 to 32 serves as a coordination point for ATP; the sequence is GKGGVGKS. Residues cysteine 201 and cysteine 204 each coordinate [4Fe-4S] cluster. At serine 291 the chain carries Phosphoserine.

It belongs to the Mrp/NBP35 ATP-binding proteins family. NUBP2/CFD1 subfamily. In terms of assembly, heterotetramer of 2 NBP35 and 2 CFD1 chains. The cofactor is [4Fe-4S] cluster.

It localises to the cytoplasm. Component of the cytosolic iron-sulfur (Fe/S) protein assembly (CIA) machinery. Required for maturation of extramitochondrial Fe-S proteins. The NBP35-CFD1 heterotetramer forms a Fe-S scaffold complex, mediating the de novo assembly of an Fe-S cluster and its transfer to target apoproteins. Nucleotide binding/hydrolysis seems to be critcal for loading of Fe-S clusters onto CFD1 and NBP35. Required for biogenesis and export of both ribosomal subunits, which may reflect a role in assembly of the Fe/S clusters in RLI1, a protein which performs rRNA processing and ribosome export. This is Cytosolic Fe-S cluster assembly factor CFD1 from Saccharomyces cerevisiae (strain ATCC 204508 / S288c) (Baker's yeast).